Consider the following 318-residue polypeptide: Acetyl-coenzyme A carboxylase carboxyl transferase subunit alpha (318 aa).

One can recognise a CoA carboxyltransferase C-terminal domain in the interval Asp-31–Ala-292.

This sequence belongs to the AccA family. Acetyl-CoA carboxylase is a heterohexamer composed of biotin carboxyl carrier protein (AccB), biotin carboxylase (AccC) and two subunits each of ACCase subunit alpha (AccA) and ACCase subunit beta (AccD).

The protein resides in the cytoplasm. The catalysed reaction is N(6)-carboxybiotinyl-L-lysyl-[protein] + acetyl-CoA = N(6)-biotinyl-L-lysyl-[protein] + malonyl-CoA. Its pathway is lipid metabolism; malonyl-CoA biosynthesis; malonyl-CoA from acetyl-CoA: step 1/1. Its function is as follows. Component of the acetyl coenzyme A carboxylase (ACC) complex. First, biotin carboxylase catalyzes the carboxylation of biotin on its carrier protein (BCCP) and then the CO(2) group is transferred by the carboxyltransferase to acetyl-CoA to form malonyl-CoA. This is Acetyl-coenzyme A carboxylase carboxyl transferase subunit alpha from Listeria monocytogenes serotype 4a (strain HCC23).